Reading from the N-terminus, the 388-residue chain is Succinate--CoA ligase [ADP-forming] subunit beta (388 aa).

In terms of domain architecture, ATP-grasp spans 9-244 (KQLFARYGLP…PSQEDPREAQ (236 aa)). ATP is bound by residues Lys-46, 53–55 (GRG), Glu-99, Thr-102, and Glu-107. The Mg(2+) site is built by Asn-199 and Asp-213. Residues Asn-264 and 321–323 (GIV) each bind substrate.

The protein belongs to the succinate/malate CoA ligase beta subunit family. In terms of assembly, heterotetramer of two alpha and two beta subunits. It depends on Mg(2+) as a cofactor.

The catalysed reaction is succinate + ATP + CoA = succinyl-CoA + ADP + phosphate. It catalyses the reaction GTP + succinate + CoA = succinyl-CoA + GDP + phosphate. It participates in carbohydrate metabolism; tricarboxylic acid cycle; succinate from succinyl-CoA (ligase route): step 1/1. Functionally, succinyl-CoA synthetase functions in the citric acid cycle (TCA), coupling the hydrolysis of succinyl-CoA to the synthesis of either ATP or GTP and thus represents the only step of substrate-level phosphorylation in the TCA. The beta subunit provides nucleotide specificity of the enzyme and binds the substrate succinate, while the binding sites for coenzyme A and phosphate are found in the alpha subunit. The polypeptide is Succinate--CoA ligase [ADP-forming] subunit beta (Photorhabdus laumondii subsp. laumondii (strain DSM 15139 / CIP 105565 / TT01) (Photorhabdus luminescens subsp. laumondii)).